A 446-amino-acid chain; its full sequence is Cytochrome P450 monooxygenase ATR14 (446 aa).

Residues 403-446 (NFTYPDEFRPDRWLDDRDQKEYEHDHGDAMQPFSVGPRDCPSQK) are disordered. Over residues 408-430 (DEFRPDRWLDDRDQKEYEHDHGD) the composition is skewed to basic and acidic residues. Cys-442 contributes to the heme binding site.

This sequence belongs to the cytochrome P450 family. Heme serves as cofactor.

The protein operates within mycotoxin biosynthesis. Its function is as follows. Cytochrome P450 monooxygenase; part of the core atranone cluster (CAC) which products are predicted to catalyze most or all steps of mycotoxin atranone synthesis, starting from geranylgeranyl pyrophosphate (GGPP). The initial cyclization of GGPP to dolabellane is probably performed by the terpene cyclase ATR13. The Baeyer-Villiger oxidation near the end of the atranone synthesis, which converts atranones D and E to atranones F and G is predicted to be catalyzed by the monooxygenase ATR8. Of the CAC's other predicted gene products, the reducing PKS ATR6 might synthesize a polyketide chain. This polyketide is probably transferred onto the atranone backbone by the polyketide transferase ATR5. Other predicted CAC products include 4 oxygenases (ATR2, ATR3, ATR4, and ATR14), 3 short-chain reductases (ATR7, ATR9, and ATR10), and a methyltransferase (ATR12). These may all be involved in the various steps of atranone biosynthesis, although their specific roles must await experimental determination. The protein is Cytochrome P450 monooxygenase ATR14 of Stachybotrys chlorohalonatus (strain IBT 40285).